We begin with the raw amino-acid sequence, 110 residues long: Ribonuclease P protein component 4 (110 aa).

Zn(2+) contacts are provided by Cys65, Cys68, Cys94, and Cys97.

It belongs to the eukaryotic/archaeal RNase P protein component 4 family. Consists of a catalytic RNA component and at least 4-5 protein subunits. Requires Zn(2+) as cofactor.

It localises to the cytoplasm. The catalysed reaction is Endonucleolytic cleavage of RNA, removing 5'-extranucleotides from tRNA precursor.. Part of ribonuclease P, a protein complex that generates mature tRNA molecules by cleaving their 5'-ends. In Methanococcus maripaludis (strain C7 / ATCC BAA-1331), this protein is Ribonuclease P protein component 4.